The following is a 652-amino-acid chain: Phosphomethylpyrimidine synthase (652 aa).

Substrate contacts are provided by residues Asn-235, Met-264, Tyr-293, His-329, 349 to 351 (SRG), 390 to 393 (DGMR), and Glu-429. His-433 provides a ligand contact to Zn(2+). A substrate-binding site is contributed by Tyr-456. Zn(2+) is bound at residue His-497. 3 residues coordinate [4Fe-4S] cluster: Cys-577, Cys-580, and Cys-585.

The protein belongs to the ThiC family. In terms of assembly, homodimer. The cofactor is [4Fe-4S] cluster.

The catalysed reaction is 5-amino-1-(5-phospho-beta-D-ribosyl)imidazole + S-adenosyl-L-methionine = 4-amino-2-methyl-5-(phosphooxymethyl)pyrimidine + CO + 5'-deoxyadenosine + formate + L-methionine + 3 H(+). Its pathway is cofactor biosynthesis; thiamine diphosphate biosynthesis. Catalyzes the synthesis of the hydroxymethylpyrimidine phosphate (HMP-P) moiety of thiamine from aminoimidazole ribotide (AIR) in a radical S-adenosyl-L-methionine (SAM)-dependent reaction. The sequence is that of Phosphomethylpyrimidine synthase from Shewanella sediminis (strain HAW-EB3).